The primary structure comprises 1454 residues: Beta-1,3-glucan-binding protein (1454 aa).

A propeptide spanning residues 1–197 is cleaved from the precursor; the sequence is MSFDLTTPFD…KRSLEMRMMN (197 aa). N-linked (GlcNAc...) asparagine glycosylation is found at Asn33, Asn55, Asn185, Asn571, Asn592, Asn825, Asn882, and Asn1153.

The protein belongs to the glycosyl hydrolase 16 family. As to quaternary structure, monomer. Expressed in the hepatopancreas and secreted into the hemolymph. Expressed at lower levels in muscle, pleopod and gill tissue.

The protein localises to the secreted. In terms of biological role, involved in the recognition of invading microorganisms. Binds specifically to beta-1,3-glucan and activates the prophenoloxidase cascade. In Penaeus vannamei (Whiteleg shrimp), this protein is Beta-1,3-glucan-binding protein.